The chain runs to 357 residues: MTETAPAIEAILAEYGELEQRLADPELHADPAAAKKVGRRFAQISPIVSTYHKLEAARGDLEAARELAADDASFAAEVDELTTKVADLDDRLTDLLAPRDPHDADDIVLEVKSGEGGEESALFAADLARMYIRYAERHGWTVTMLGETTSDLGGYKDATLSIAGKGDSADGVWSRLKFEGGVHRVQRVPVTESQGRVHTSAAGVLVYPEPDEVEQVQIDESDLRIDVYRSSGKGGQGVNTTDSAVRITHLPTGIVVTCQNERSQLQNKARAMQVLAARLQALAEEQASADASADRASQIRTVDRSERIRTYNYPENRIADHRINYKSHNLDQVLDGDLDPLFDALAAADKQARLQNT.

Glutamine 236 carries the N5-methylglutamine modification.

The protein belongs to the prokaryotic/mitochondrial release factor family. In terms of processing, methylated by PrmC. Methylation increases the termination efficiency of RF1.

Its subcellular location is the cytoplasm. Functionally, peptide chain release factor 1 directs the termination of translation in response to the peptide chain termination codons UAG and UAA. In Mycolicibacterium vanbaalenii (strain DSM 7251 / JCM 13017 / BCRC 16820 / KCTC 9966 / NRRL B-24157 / PYR-1) (Mycobacterium vanbaalenii), this protein is Peptide chain release factor 1.